Here is a 376-residue protein sequence, read N- to C-terminus: Na(+)/H(+) antiporter NhaA (376 aa).

11 helical membrane-spanning segments follow: residues 8 to 28, 49 to 69, 87 to 107, 117 to 137, 140 to 160, 162 to 182, 209 to 229, 248 to 268, 270 to 290, 321 to 341, and 349 to 369; these read FLATEAAGGIILIAAAAAAML, LSLLHWINDALMALFFLLVGL, ILPCIAAAAGMAAPALLYLAF, GWAIPTATDIAFAIGVLALLG, APASLKLFLTTIAIVDDMGAV, IIALAYTAAISGPALLAAIVI, LAVLLSGVHATIAGVLAALAI, PWVAFAIVPLFGFANAGVSFA, IGAEQLLAPLPLGIAAGLFLG, GVALLCGIGFTMSLFIGGLAF, and EVKIGVLGGSILSAIAGYALL.

Belongs to the NhaA Na(+)/H(+) (TC 2.A.33) antiporter family.

It is found in the cell inner membrane. The enzyme catalyses Na(+)(in) + 2 H(+)(out) = Na(+)(out) + 2 H(+)(in). Na(+)/H(+) antiporter that extrudes sodium in exchange for external protons. This is Na(+)/H(+) antiporter NhaA from Rhizorhabdus wittichii (strain DSM 6014 / CCUG 31198 / JCM 15750 / NBRC 105917 / EY 4224 / RW1) (Sphingomonas wittichii).